Consider the following 228-residue polypeptide: Probable endo-1,4-beta-xylanase A (228 aa).

The signal sequence occupies residues Met1–Ala18. An N-linked (GlcNAc...) asparagine glycan is attached at Asn29. The region spanning Ala40–Tyr228 is the GH11 domain. Glu124 serves as the catalytic Nucleophile. The Proton donor role is filled by Glu215.

The protein belongs to the glycosyl hydrolase 11 (cellulase G) family.

It is found in the secreted. The catalysed reaction is Endohydrolysis of (1-&gt;4)-beta-D-xylosidic linkages in xylans.. It participates in glycan degradation; xylan degradation. In terms of biological role, endo-1,4-beta-xylanase involved in the hydrolysis of xylan, a major structural heterogeneous polysaccharide found in plant biomass representing the second most abundant polysaccharide in the biosphere, after cellulose. The sequence is that of Probable endo-1,4-beta-xylanase A (xlnA) from Aspergillus fumigatus (strain CBS 144.89 / FGSC A1163 / CEA10) (Neosartorya fumigata).